The following is a 118-amino-acid chain: MARIAGINVPDHKHAVIGLTAIYGIGKTRSKAILAATGIAETTKIGELSDETLDVLRDAVGKYTVEGDLRREVTLNIKRLMDLGCYRGLRHRRSLPLRGQRTKTNARTRKGPRKPIKR.

The interval 94–118 (SLPLRGQRTKTNARTRKGPRKPIKR) is disordered.

The protein belongs to the universal ribosomal protein uS13 family. As to quaternary structure, part of the 30S ribosomal subunit. Forms a loose heterodimer with protein S19. Forms two bridges to the 50S subunit in the 70S ribosome.

Functionally, located at the top of the head of the 30S subunit, it contacts several helices of the 16S rRNA. In the 70S ribosome it contacts the 23S rRNA (bridge B1a) and protein L5 of the 50S subunit (bridge B1b), connecting the 2 subunits; these bridges are implicated in subunit movement. Contacts the tRNAs in the A and P-sites. In Pseudoalteromonas translucida (strain TAC 125), this protein is Small ribosomal subunit protein uS13.